The chain runs to 440 residues: Amino-acid acetyltransferase (440 aa).

Residues 289–429 form the N-acetyltransferase domain; sequence ETIRLATVSD…QHYNYQRRSK (141 aa).

It belongs to the acetyltransferase family. ArgA subfamily.

The protein localises to the cytoplasm. It catalyses the reaction L-glutamate + acetyl-CoA = N-acetyl-L-glutamate + CoA + H(+). It functions in the pathway amino-acid biosynthesis; L-arginine biosynthesis; N(2)-acetyl-L-ornithine from L-glutamate: step 1/4. The protein is Amino-acid acetyltransferase (argA) of Pasteurella multocida (strain Pm70).